A 599-amino-acid polypeptide reads, in one-letter code: Aspartate--tRNA(Asp/Asn) ligase (599 aa).

Glu-173 serves as a coordination point for L-aspartate. The tract at residues Gln-197–Lys-200 is aspartate. Residue Arg-219 participates in L-aspartate binding. Residues Arg-219 to Glu-221 and Gln-228 contribute to the ATP site. An L-aspartate-binding site is contributed by His-449. Glu-482 provides a ligand contact to ATP. An L-aspartate-binding site is contributed by Arg-489. Gly-534–Arg-537 is an ATP binding site.

It belongs to the class-II aminoacyl-tRNA synthetase family. Type 1 subfamily. As to quaternary structure, homodimer.

The protein localises to the cytoplasm. The catalysed reaction is tRNA(Asx) + L-aspartate + ATP = L-aspartyl-tRNA(Asx) + AMP + diphosphate. Its function is as follows. Aspartyl-tRNA synthetase with relaxed tRNA specificity since it is able to aspartylate not only its cognate tRNA(Asp) but also tRNA(Asn). Reaction proceeds in two steps: L-aspartate is first activated by ATP to form Asp-AMP and then transferred to the acceptor end of tRNA(Asp/Asn). The chain is Aspartate--tRNA(Asp/Asn) ligase from Marinobacter nauticus (strain ATCC 700491 / DSM 11845 / VT8) (Marinobacter aquaeolei).